Reading from the N-terminus, the 93-residue chain is Small ribosomal subunit protein bS16 (93 aa).

This sequence belongs to the bacterial ribosomal protein bS16 family.

The polypeptide is Small ribosomal subunit protein bS16 (Dictyoglomus thermophilum (strain ATCC 35947 / DSM 3960 / H-6-12)).